The chain runs to 531 residues: Fatty acid--[acyl-carrier-protein] ligase MmaC (531 aa).

Residue Thr-169 participates in Mg(2+) binding. ATP is bound by residues Ile-218, Val-308, and Ser-312. Glu-313 contacts Mg(2+). Asp-403 serves as a coordination point for ATP.

This sequence belongs to the ATP-dependent AMP-binding enzyme family. It depends on Mg(2+) as a cofactor.

The catalysed reaction is a (2E)-enoyl fatty acid + holo-[ACP] + ATP = a (2E)-enoyl-[ACP] + AMP + diphosphate. The enzyme catalyses a (2E)-enoyl fatty acid + ATP + H(+) = a (2E)-2-fatty-enoyl-AMP + diphosphate. It catalyses the reaction a (2E)-2-fatty-enoyl-AMP + holo-[ACP] = a (2E)-enoyl-[ACP] + AMP + H(+). It carries out the reaction (2E)-decenoate + holo-[ACP] + ATP = (2E)-decenoyl-[ACP] + AMP + diphosphate. The catalysed reaction is a (3R)-3-isocyanyl-fatty acid + holo-[ACP] + ATP = a (3R)-3-isocyanyl-fatty acyl-[ACP] + AMP + diphosphate. The enzyme catalyses a (3R)-3-isocyanyl-fatty acid + ATP + H(+) = a (3R)-3-isocyanyl-fatty acyl-AMP + diphosphate. It catalyses the reaction a (3R)-3-isocyanyl-fatty acyl-AMP + holo-[ACP] = a (3R)-3-isocyanyl-fatty acyl-[ACP] + AMP + H(+). Acyl:acyl-carrier protein ligase involved in the biosynthesis of a unique class of isonitrile lipopeptides (INLPs) that seem to play a role in metal acquisition in M.marinum. Acts twice during the INLP pathway, catalyzing the activation of (2E)-2-decenoate as well as probably the corresponding (3R)-3-isocyanyl-fatty acid as acyl-adenylates (acyl-AMP), and then the acyl transfer to the dedicated acyl-carrier protein MmaB. This Mycobacterium marinum (strain ATCC BAA-535 / M) protein is Fatty acid--[acyl-carrier-protein] ligase MmaC.